Here is a 479-residue protein sequence, read N- to C-terminus: Aspartyl/glutamyl-tRNA(Asn/Gln) amidotransferase subunit B (479 aa).

Belongs to the GatB/GatE family. GatB subfamily. In terms of assembly, heterotrimer of A, B and C subunits.

The enzyme catalyses L-glutamyl-tRNA(Gln) + L-glutamine + ATP + H2O = L-glutaminyl-tRNA(Gln) + L-glutamate + ADP + phosphate + H(+). It catalyses the reaction L-aspartyl-tRNA(Asn) + L-glutamine + ATP + H2O = L-asparaginyl-tRNA(Asn) + L-glutamate + ADP + phosphate + 2 H(+). In terms of biological role, allows the formation of correctly charged Asn-tRNA(Asn) or Gln-tRNA(Gln) through the transamidation of misacylated Asp-tRNA(Asn) or Glu-tRNA(Gln) in organisms which lack either or both of asparaginyl-tRNA or glutaminyl-tRNA synthetases. The reaction takes place in the presence of glutamine and ATP through an activated phospho-Asp-tRNA(Asn) or phospho-Glu-tRNA(Gln). The protein is Aspartyl/glutamyl-tRNA(Asn/Gln) amidotransferase subunit B of Streptococcus equi subsp. zooepidemicus (strain MGCS10565).